We begin with the raw amino-acid sequence, 132 residues long: Global transcriptional regulator Spx (132 aa).

Cys10 and Cys13 are oxidised to a cystine.

This sequence belongs to the ArsC family. Spx subfamily. In terms of assembly, interacts with the C-terminal domain of the alpha subunit of the RNAP.

Its subcellular location is the cytoplasm. Its function is as follows. Global transcriptional regulator that plays a key role in stress response and exerts either positive or negative regulation of genes. Acts by interacting with the C-terminal domain of the alpha subunit of the RNA polymerase (RNAP). This interaction can enhance binding of RNAP to the promoter region of target genes and stimulate their transcription, or block interaction of RNAP with activator. The chain is Global transcriptional regulator Spx from Lactiplantibacillus plantarum (strain ATCC BAA-793 / NCIMB 8826 / WCFS1) (Lactobacillus plantarum).